The chain runs to 313 residues: Protein TIC 22-like, chloroplastic (313 aa).

The transit peptide at 1-96 directs the protein to the chloroplast; it reads MNSNIFPPSK…RISDDGGGAR (96 aa).

Belongs to the Tic22 family.

It is found in the plastid. Its subcellular location is the chloroplast intermembrane space. Its function is as follows. Involved in protein precursor import into chloroplasts. The polypeptide is Protein TIC 22-like, chloroplastic (TIC22L) (Arabidopsis thaliana (Mouse-ear cress)).